Here is a 72-residue protein sequence, read N- to C-terminus: Omega-conotoxin-like S6.6 (72 aa).

A signal peptide spans 1–22 (MKLTCVVIVAVLLLTACQLLTA). Positions 23 to 45 (DDSRGTQKHRALRSDTKLSMSTR) are excised as a propeptide. Intrachain disulfides connect Cys-46/Cys-61, Cys-53/Cys-65, and Cys-60/Cys-71. Cys-71 bears the Cysteine amide mark.

This sequence belongs to the conotoxin O1 superfamily. In terms of tissue distribution, expressed by the venom duct.

The protein resides in the secreted. Its function is as follows. Omega-conotoxins act at presynaptic membranes, they bind and block voltage-gated calcium channels (Cav). This toxin blocks N-, P- and Q-type calcium channels. The protein is Omega-conotoxin-like S6.6 of Conus striatus (Striated cone).